A 388-amino-acid polypeptide reads, in one-letter code: Pepsin F (388 aa).

The first 15 residues, 1–15 (MKWLGLLGLVALSEC), serve as a signal peptide directing secretion. A propeptide spans 16–58 (LVTIPLMKVKSMRENLRENDILLDYLEKHPYRPTYKLLSGQQD) (activation peptide). Residues 74-385 (YIGIISIGTP…DRANNRIGLA (312 aa)) enclose the Peptidase A1 domain. The active site involves aspartate 92. 2 cysteine pairs are disulfide-bonded: cysteine 105-cysteine 110 and cysteine 266-cysteine 270. The active site involves aspartate 275. Cysteine 309 and cysteine 343 are joined by a disulfide.

The protein belongs to the peptidase A1 family.

The protein localises to the secreted. The enzyme catalyses Preferential cleavage: hydrophobic, preferably aromatic, residues in P1 and P1' positions. Cleaves 1-Phe-|-Val-2, 4-Gln-|-His-5, 13-Glu-|-Ala-14, 14-Ala-|-Leu-15, 15-Leu-|-Tyr-16, 16-Tyr-|-Leu-17, 23-Gly-|-Phe-24, 24-Phe-|-Phe-25 and 25-Phe-|-Tyr-26 bonds in the B chain of insulin.. Functionally, shows particularly broad specificity; although bonds involving phenylalanine and leucine are preferred, many others are also cleaved to some extent. This Oryctolagus cuniculus (Rabbit) protein is Pepsin F.